We begin with the raw amino-acid sequence, 498 residues long: MGLFNRLFGKKRQEEKSTTDSIEEAAEQEVTQEKPALLAETAETAESQQSVYEKDVTESQAEQVSDARIIEDGQNSKEPAASGHSVQEHKQQPVQHQQEVFHSENSVAAVQNNTETMPSQQKKDEKPNQSPDFMAEYYARKAELAQKVESQKPAETAEQESQTTLSDQKETETAVNQSEEEASSQIAESVESEEEKYNRSLKKTRTGFGARLNAFLANFRNVDEEFFEDLEEMLILSDVGVQVASTLTEDLRYEAKLEKAKKPEALRRVIIEKLVDIYDKDGQFNEKINFQNDLTVMLFVGVNGVGKTTSIGKLAYKYKHQGKKVMLVAADTFRAGAVAQLAEWGRRVDVPVVTGPKNADPASVVYDGVERAVAADVDILMIDTAGRLQNKDNLMAELEKIGRVVKRVIPDAPHETLLTLDASTGQNALVQAKEFSKITPLTGLILTKIDGTAKGGVVLAIRQELAIPVKFIGFGEKIDDIGEFHSEDFMRGLLEGLL.

2 disordered regions span residues 1–130 (MGLF…PNQS) and 147–200 (KVES…YNRS). Residues 36 to 46 (ALLAETAETAE) show a composition bias toward low complexity. Over residues 103–120 (SENSVAAVQNNTETMPSQ) the composition is skewed to polar residues. Residues 301–308 (GVNGVGKT), 383–387 (DTAGR), and 447–450 (TKID) contribute to the GTP site.

The protein belongs to the GTP-binding SRP family. FtsY subfamily. Part of the signal recognition particle protein translocation system, which is composed of SRP and FtsY.

Its subcellular location is the cell membrane. It is found in the cytoplasm. It catalyses the reaction GTP + H2O = GDP + phosphate + H(+). Functionally, involved in targeting and insertion of nascent membrane proteins into the cytoplasmic membrane. Acts as a receptor for the complex formed by the signal recognition particle (SRP) and the ribosome-nascent chain (RNC). This chain is Signal recognition particle receptor FtsY, found in Streptococcus mutans serotype c (strain ATCC 700610 / UA159).